The primary structure comprises 882 residues: Translation initiation factor IF-2 (882 aa).

Residues 38–294 (IEDSQASWVK…KSKHKRKKEN (257 aa)) form a disordered region. Basic and acidic residues-rich tracts occupy residues 66–76 (TRDEAVKKHSG), 109–128 (GRRE…ERHS), and 207–219 (PDNK…DAKR). Residues 282–292 (PGRKSKHKRKK) show a composition bias toward basic residues. The tr-type G domain maps to 383–556 (ARPPVVTIMG…EMNEIRANPD (174 aa)). The tract at residues 392–399 (GHVDHGKT) is G1. 392–399 (GHVDHGKT) provides a ligand contact to GTP. The G2 stretch occupies residues 417–421 (GITQH). Residues 438-441 (DTPG) are G3. GTP-binding positions include 438–442 (DTPGH) and 492–495 (NKID). Residues 492–495 (NKID) are G4. The G5 stretch occupies residues 528-530 (SAK).

The protein belongs to the TRAFAC class translation factor GTPase superfamily. Classic translation factor GTPase family. IF-2 subfamily.

The protein resides in the cytoplasm. One of the essential components for the initiation of protein synthesis. Protects formylmethionyl-tRNA from spontaneous hydrolysis and promotes its binding to the 30S ribosomal subunits. Also involved in the hydrolysis of GTP during the formation of the 70S ribosomal complex. This Syntrophomonas wolfei subsp. wolfei (strain DSM 2245B / Goettingen) protein is Translation initiation factor IF-2.